Consider the following 381-residue polypeptide: Dual-specificity RNA methyltransferase RlmN (381 aa).

The active-site Proton acceptor is Glu-95. Residues 101 to 347 enclose the Radical SAM core domain; that stretch reads EDDRGTLCVS…TTVRKTRGDD (247 aa). Cys-108 and Cys-352 form a disulfide bridge. [4Fe-4S] cluster-binding residues include Cys-115, Cys-119, and Cys-122. S-adenosyl-L-methionine is bound by residues 178 to 179, Ser-210, 232 to 234, and Asn-309; these read GE and SLH. Cys-352 functions as the S-methylcysteine intermediate in the catalytic mechanism.

This sequence belongs to the radical SAM superfamily. RlmN family. It depends on [4Fe-4S] cluster as a cofactor.

It is found in the cytoplasm. It catalyses the reaction adenosine(2503) in 23S rRNA + 2 reduced [2Fe-2S]-[ferredoxin] + 2 S-adenosyl-L-methionine = 2-methyladenosine(2503) in 23S rRNA + 5'-deoxyadenosine + L-methionine + 2 oxidized [2Fe-2S]-[ferredoxin] + S-adenosyl-L-homocysteine. The enzyme catalyses adenosine(37) in tRNA + 2 reduced [2Fe-2S]-[ferredoxin] + 2 S-adenosyl-L-methionine = 2-methyladenosine(37) in tRNA + 5'-deoxyadenosine + L-methionine + 2 oxidized [2Fe-2S]-[ferredoxin] + S-adenosyl-L-homocysteine. Its function is as follows. Specifically methylates position 2 of adenine 2503 in 23S rRNA and position 2 of adenine 37 in tRNAs. m2A2503 modification seems to play a crucial role in the proofreading step occurring at the peptidyl transferase center and thus would serve to optimize ribosomal fidelity. The polypeptide is Dual-specificity RNA methyltransferase RlmN (Bordetella petrii (strain ATCC BAA-461 / DSM 12804 / CCUG 43448)).